Reading from the N-terminus, the 390-residue chain is Alpha-2B adrenergic receptor (390 aa).

The chain crosses the membrane as a helical span at residues 1–25; sequence AIATVITFLILFTIFGNSLVILAVL. Residues 26–36 lie on the Cytoplasmic side of the membrane; that stretch reads TSRSLRAPQNL. A helical transmembrane segment spans residues 37 to 62; it reads FLVSLAAADIMVATLIIPFSLANELL. The Extracellular portion of the chain corresponds to 63–72; the sequence is GYWYFRRTWC. A disulfide bridge links Cys-72 with Cys-151. A helical membrane pass occupies residues 73-95; sequence EVYLALDVLFCTSSIVHLCAISL. Over 96-117 the chain is Cytoplasmic; the sequence is DRYWAVSRALEYNSKRTPRRIK. The chain crosses the membrane as a helical span at residues 118–140; sequence CIILTVWLIAAAISLPPLIYKGD. The Extracellular segment spans residues 141 to 156; it reads QGPQPRGRPQCKLNQE. The chain crosses the membrane as a helical span at residues 157–180; it reads AWYILSSSIGSFFAPCLIMILVYL. Residues 181 to 354 lie on the Cytoplasmic side of the membrane; sequence RIYLIAKRSH…LTREKRFTFV (174 aa). Disordered regions lie at residues 191–218 and 233–311; these read RRGPGAKGGPRKGESKQPHSLDSGPSAL and EANG…PLQQ. Residues 280–292 show a composition bias toward acidic residues; that stretch reads LEEEADKEEEEEC. The chain crosses the membrane as a helical span at residues 355 to 378; the sequence is LAVVIGVFVLCWFPFFFSYSLGAI. Topologically, residues 379 to 390 are extracellular; it reads CPQHCKVPHGLF.

Belongs to the G-protein coupled receptor 1 family. Adrenergic receptor subfamily. ADRA2B sub-subfamily. Interacts with RAB26. Interacts with PPP1R9B. Interacts with GGA1, GGA2 and GGA3.

Its subcellular location is the cell membrane. Alpha-2 adrenergic receptors mediate the catecholamine-induced inhibition of adenylate cyclase through the action of G proteins. In Dugong dugon (Dugong), this protein is Alpha-2B adrenergic receptor (ADRA2B).